A 612-amino-acid chain; its full sequence is UvrABC system protein C (612 aa).

In terms of domain architecture, GIY-YIG spans 20–98 (THSGVYRMLD…IKQHRPKYNI (79 aa)). Positions 208-243 (SSVLEEISAKMYQASEDMEYEKAQVYRDQLVVLRKL) constitute a UVR domain.

The protein belongs to the UvrC family. Interacts with UvrB in an incision complex.

The protein resides in the cytoplasm. Its function is as follows. The UvrABC repair system catalyzes the recognition and processing of DNA lesions. UvrC both incises the 5' and 3' sides of the lesion. The N-terminal half is responsible for the 3' incision and the C-terminal half is responsible for the 5' incision. The chain is UvrABC system protein C from Francisella tularensis subsp. tularensis (strain WY96-3418).